Consider the following 270-residue polypeptide: Myelin protein zero-like protein 1 (270 aa).

Residues 1-35 form the signal peptide; the sequence is MAEAVGAVTLIAAPARRRWLWSALAAMLGLLTARI. In terms of domain architecture, Ig-like V-type spans 36-151; the sequence is SALEVHTPKE…DIVVRPGQIR (116 aa). Residues 36–162 lie on the Extracellular side of the membrane; that stretch reads SALEVHTPKE…HVVEIDNLLV (127 aa). N-linked (GlcNAc...) asparagine glycosylation is found at asparagine 50 and asparagine 130. Cysteine 58 and cysteine 135 are joined by a disulfide. A helical transmembrane segment spans residues 163–183; sequence FLVWVVVGTVTAVVLGLTLLI. The Cytoplasmic portion of the chain corresponds to 184-270; that stretch reads SLVLVVLYRR…SVVYADIRKD (87 aa). The segment at 201–257 is disordered; that stretch reads TGCSTSERLSPVKQAPRKCPSDTEGLVKSPPSAGSHQGPVIYAQLDHSGGHHSGKIN. A phosphoserine mark is found at serine 204, serine 206, serine 210, and serine 221. Positions 240–245 match the ITIM motif 1 motif; it reads VIYAQL. Residue tyrosine 242 is modified to Phosphotyrosine. Serine 261 carries the post-translational modification Phosphoserine. The ITIM motif 2 motif lies at 262–267; the sequence is VVYADI. Tyrosine 264 is subject to Phosphotyrosine.

Belongs to the myelin P0 protein family. In terms of assembly, interacts with phosphorylated PTPN11/SHP-2. In terms of processing, phosphorylated on tyrosine residues upon stimulation with pervanadate and concanavalin-A (ConA). Phosphorylation at Tyr-242 and Tyr-264 is required for interaction with PTPN11/SHP-2. Dephosphorylated by PTPN11/SHP-2 (in vitro). Post-translationally, N-glycosylated.

It is found in the membrane. Cell surface receptor, which is involved in signal transduction processes. Recruits PTPN11/SHP-2 to the cell membrane and is a putative substrate of PTPN11/SHP-2. Is a major receptor for concanavalin-A (ConA) and is involved in cellular signaling induced by ConA, which probably includes Src family tyrosine-protein kinases. May be involved in regulation of integrin-mediated cell motility. The protein is Myelin protein zero-like protein 1 (Mpzl1) of Rattus norvegicus (Rat).